The chain runs to 90 residues: Defensin-like protein 178 (90 aa).

Positions 1-23 (MAKATSSLVVPIIFLVIFALVEQ) are cleaved as a signal peptide. Intrachain disulfides connect Cys-27–Cys-66, Cys-36–Cys-55, Cys-39–Cys-60, and Cys-43–Cys-62.

This sequence belongs to the DEFL family.

The protein resides in the secreted. This chain is Defensin-like protein 178 (LCR64), found in Arabidopsis thaliana (Mouse-ear cress).